The sequence spans 770 residues: Multifunctional tryptophan biosynthesis protein (770 aa).

Positions 25-225 (NVILIDNYDS…LKLTAGTWEG (201 aa)) constitute a Glutamine amidotransferase type-1 domain. 76–78 (GPG) is a binding site for L-glutamine. Catalysis depends on cysteine 104, which acts as the Nucleophile; for GATase activity. L-glutamine is bound by residues glutamine 108 and 154–155 (SL). Active-site for GATase activity residues include histidine 199 and glutamate 201. A disordered region spans residues 228–251 (KHFGEQSSTTKATVPSNPPPKTDK). Residues 232-242 (EQSSTTKATVP) show a composition bias toward polar residues. The indole-3-glycerol phosphate synthase stretch occupies residues 255–519 (ILERIYDHRR…DTATFIAELL (265 aa)). The N-(5'-phosphoribosyl)anthranilate isomerase stretch occupies residues 535–770 (LVKICGTRSE…RAFVQAVRGL (236 aa)).

The catalysed reaction is N-(5-phospho-beta-D-ribosyl)anthranilate = 1-(2-carboxyphenylamino)-1-deoxy-D-ribulose 5-phosphate. The enzyme catalyses 1-(2-carboxyphenylamino)-1-deoxy-D-ribulose 5-phosphate + H(+) = (1S,2R)-1-C-(indol-3-yl)glycerol 3-phosphate + CO2 + H2O. It carries out the reaction chorismate + L-glutamine = anthranilate + pyruvate + L-glutamate + H(+). It participates in amino-acid biosynthesis; L-tryptophan biosynthesis; L-tryptophan from chorismate: step 1/5. It functions in the pathway amino-acid biosynthesis; L-tryptophan biosynthesis; L-tryptophan from chorismate: step 3/5. The protein operates within amino-acid biosynthesis; L-tryptophan biosynthesis; L-tryptophan from chorismate: step 4/5. In terms of biological role, trifunctional enzyme bearing the Gln amidotransferase (GATase) domain of anthranilate synthase, indole-glycerolphosphate synthase, and phosphoribosylanthranilate isomerase activities. This is Multifunctional tryptophan biosynthesis protein (trpC) from Aspergillus niger.